The primary structure comprises 502 residues: UTP--glucose-1-phosphate uridylyltransferase 2 (502 aa).

Residues methionine 1–glycine 20 are disordered. Residues proline 9–glycine 20 show a composition bias toward polar residues. UTP-binding positions include leucine 114–glycine 117, lysine 128, glutamine 191, and glycine 220. Substrate is bound at residue glycine 116 to glycine 117. Substrate is bound by residues histidine 221 and asparagine 249–aspartate 251. UTP is bound by residues aspartate 251 and lysine 390.

This sequence belongs to the UDPGP type 1 family.

It catalyses the reaction alpha-D-glucose 1-phosphate + UTP + H(+) = UDP-alpha-D-glucose + diphosphate. In terms of biological role, plays a central role as a glucosyl donor in cellular metabolic pathways. The chain is UTP--glucose-1-phosphate uridylyltransferase 2 (ugpB) from Dictyostelium discoideum (Social amoeba).